Here is a 286-residue protein sequence, read N- to C-terminus: 4-hydroxy-tetrahydrodipicolinate synthase (286 aa).

Residue T42 coordinates pyruvate. The active-site Proton donor/acceptor is the Y129. The Schiff-base intermediate with substrate role is filled by K157. A pyruvate-binding site is contributed by I196.

This sequence belongs to the DapA family. In terms of assembly, homotetramer; dimer of dimers.

The protein localises to the cytoplasm. The catalysed reaction is L-aspartate 4-semialdehyde + pyruvate = (2S,4S)-4-hydroxy-2,3,4,5-tetrahydrodipicolinate + H2O + H(+). It functions in the pathway amino-acid biosynthesis; L-lysine biosynthesis via DAP pathway; (S)-tetrahydrodipicolinate from L-aspartate: step 3/4. In terms of biological role, catalyzes the condensation of (S)-aspartate-beta-semialdehyde [(S)-ASA] and pyruvate to 4-hydroxy-tetrahydrodipicolinate (HTPA). This Chlamydia trachomatis serovar A (strain ATCC VR-571B / DSM 19440 / HAR-13) protein is 4-hydroxy-tetrahydrodipicolinate synthase.